We begin with the raw amino-acid sequence, 804 residues long: Lon protease 2 (804 aa).

In terms of domain architecture, Lon N-terminal spans 19 to 216 (VPILPLRNSV…LVLAMVGRQL (198 aa)). 367–374 (GPPGVGKT) is an ATP binding site. Residues 603 to 784 (TLQPGVATGL…EEILPLVLEP (182 aa)) form the Lon proteolytic domain. Residues Ser-690 and Lys-733 contribute to the active site. The disordered stretch occupies residues 782 to 804 (LEPPRRAPAQSASPEELEEQAGV).

This sequence belongs to the peptidase S16 family. Homohexamer. Organized in a ring with a central cavity.

It localises to the cytoplasm. It catalyses the reaction Hydrolysis of proteins in presence of ATP.. Functionally, ATP-dependent serine protease that mediates the selective degradation of mutant and abnormal proteins as well as certain short-lived regulatory proteins. Required for cellular homeostasis and for survival from DNA damage and developmental changes induced by stress. Degrades polypeptides processively to yield small peptide fragments that are 5 to 10 amino acids long. Binds to DNA in a double-stranded, site-specific manner. The chain is Lon protease 2 from Sorangium cellulosum (strain So ce56) (Polyangium cellulosum (strain So ce56)).